Consider the following 262-residue polypeptide: Acyl-[acyl-carrier-protein]--UDP-N-acetylglucosamine O-acyltransferase (262 aa).

It belongs to the transferase hexapeptide repeat family. LpxA subfamily. Homotrimer.

It is found in the cytoplasm. It carries out the reaction a (3R)-hydroxyacyl-[ACP] + UDP-N-acetyl-alpha-D-glucosamine = a UDP-3-O-[(3R)-3-hydroxyacyl]-N-acetyl-alpha-D-glucosamine + holo-[ACP]. Its pathway is glycolipid biosynthesis; lipid IV(A) biosynthesis; lipid IV(A) from (3R)-3-hydroxytetradecanoyl-[acyl-carrier-protein] and UDP-N-acetyl-alpha-D-glucosamine: step 1/6. Involved in the biosynthesis of lipid A, a phosphorylated glycolipid that anchors the lipopolysaccharide to the outer membrane of the cell. The protein is Acyl-[acyl-carrier-protein]--UDP-N-acetylglucosamine O-acyltransferase of Pectobacterium atrosepticum (strain SCRI 1043 / ATCC BAA-672) (Erwinia carotovora subsp. atroseptica).